Consider the following 86-residue polypeptide: Exodeoxyribonuclease 7 small subunit (86 aa).

The protein belongs to the XseB family. In terms of assembly, heterooligomer composed of large and small subunits.

It is found in the cytoplasm. The enzyme catalyses Exonucleolytic cleavage in either 5'- to 3'- or 3'- to 5'-direction to yield nucleoside 5'-phosphates.. Its function is as follows. Bidirectionally degrades single-stranded DNA into large acid-insoluble oligonucleotides, which are then degraded further into small acid-soluble oligonucleotides. The sequence is that of Exodeoxyribonuclease 7 small subunit from Xanthomonas euvesicatoria pv. vesicatoria (strain 85-10) (Xanthomonas campestris pv. vesicatoria).